The sequence spans 205 residues: Small ribosomal subunit protein uS4c (205 aa).

Residues 22–42 (TSKISKKTNTPGEHGQPQNKL) form a disordered region. Residues 28–42 (KTNTPGEHGQPQNKL) show a composition bias toward polar residues. The 64-residue stretch at 94 to 157 (MRLDNIVYRL…ASRDLVKKFV (64 aa)) folds into the S4 RNA-binding domain.

Belongs to the universal ribosomal protein uS4 family. As to quaternary structure, part of the 30S ribosomal subunit. Contacts protein S5. The interaction surface between S4 and S5 is involved in control of translational fidelity.

Its subcellular location is the plastid. It localises to the chloroplast. In terms of biological role, one of the primary rRNA binding proteins, it binds directly to 16S rRNA where it nucleates assembly of the body of the 30S subunit. With S5 and S12 plays an important role in translational accuracy. In Tupiella akineta (Green alga), this protein is Small ribosomal subunit protein uS4c (rps4).